We begin with the raw amino-acid sequence, 461 residues long: Probable ornithine decarboxylase (461 aa).

The segment at 1-35 (MTGTKRNGEEVVNENNNNNVAEETNKKAKVDESST) is disordered. The segment covering 13-22 (NENNNNNVAE) has biased composition (low complexity). Positions 23-32 (ETNKKAKVDE) are enriched in basic and acidic residues. K116 bears the N6-(pyridoxal phosphate)lysine mark. Pyridoxal 5'-phosphate is bound by residues S247, G284, and 317–320 (EPGR). 375–376 (FD) contributes to the substrate binding site. C402 acts as the Proton donor; shared with dimeric partner in catalysis. D403 is a binding site for substrate. Y431 contributes to the pyridoxal 5'-phosphate binding site.

The protein belongs to the Orn/Lys/Arg decarboxylase class-II family. As to quaternary structure, homodimer. Only the dimer is catalytically active, as the active sites are constructed of residues from both monomers. Pyridoxal 5'-phosphate is required as a cofactor.

It carries out the reaction L-ornithine + H(+) = putrescine + CO2. It functions in the pathway amine and polyamine biosynthesis; putrescine biosynthesis via L-ornithine pathway; putrescine from L-ornithine: step 1/1. With respect to regulation, inhibited by antizyme (AZ) in response to polyamine levels. AZ inhibits the assembly of the functional homodimer by binding to ODC monomers and targeting them for ubiquitin-independent proteolytic destruction by the 26S proteasome. Functionally, catalyzes the first and rate-limiting step of polyamine biosynthesis that converts ornithine into putrescine, which is the precursor for the polyamines, spermidine and spermine. Polyamines are essential for cell proliferation and are implicated in cellular processes, ranging from DNA replication to apoptosis. The chain is Probable ornithine decarboxylase (odc) from Dictyostelium discoideum (Social amoeba).